The primary structure comprises 352 residues: N-terminal EF-hand calcium-binding protein 1 (352 aa).

The residue at position 4 (S4) is a Phosphoserine. EF-hand domains lie at 26–61 (KGMSIFLDILRRADKNDDGKLSFEEFKAYFADGVLS) and 60–95 (LSGEELHELFHTIDTHNTNNLDTEELCEYFSQHLGE). Ca(2+) contacts are provided by D39, N41, D43, K45, and E50. Residues 135–163 (LLKETLNQLQSLQNSLECAMETTEEQTRQ) are a coiled coil. Residues 155–202 (ETTEEQTRQERQGPSKPEVLSIQWPGKRSSRRVQRHNSFSPNSPQFNV) form a disordered region. Polar residues predominate over residues 190-202 (HNSFSPNSPQFNV). 2 positions are modified to phosphoserine: S192 and S197. Residues 209–275 (EEDNQWMTQI…EEFQLALKHY (67 aa)) adopt a coiled-coil conformation. Positions 252 to 340 (MLVQRQMSVT…LETPELTSTM (89 aa)) constitute an ABM domain.

Interacts with STX1. May interact with CPNE6. In terms of tissue distribution, expressed in brain (at protein level). Expressed in the cerebral cortex only in layer 4, thalamic nuclei (the mediodorsal nucleus), hippocampus (a small band of pyramidal neurons at the boundary between CA1 and CA3), interneurons interspersed throughout the hippocampus proper, interneurons in the hilus, bodies of the neurons but also their dendritic projections (at protein level).

Its subcellular location is the cytoplasm. The chain is N-terminal EF-hand calcium-binding protein 1 (Necab1) from Mus musculus (Mouse).